A 386-amino-acid polypeptide reads, in one-letter code: Succinate--CoA ligase [ADP-forming] subunit beta (386 aa).

The ATP-grasp domain maps to 9–244 (KELLRKYGVV…FDEEDADEIE (236 aa)). ATP is bound by residues Lys-46, 53-55 (GRG), Glu-99, Ala-102, and Glu-107. Positions 199 and 213 each coordinate Mg(2+). Residues Asn-264 and 321–323 (GIM) contribute to the substrate site.

It belongs to the succinate/malate CoA ligase beta subunit family. In terms of assembly, heterotetramer of two alpha and two beta subunits. Mg(2+) is required as a cofactor.

It carries out the reaction succinate + ATP + CoA = succinyl-CoA + ADP + phosphate. It catalyses the reaction GTP + succinate + CoA = succinyl-CoA + GDP + phosphate. It participates in carbohydrate metabolism; tricarboxylic acid cycle; succinate from succinyl-CoA (ligase route): step 1/1. Functionally, succinyl-CoA synthetase functions in the citric acid cycle (TCA), coupling the hydrolysis of succinyl-CoA to the synthesis of either ATP or GTP and thus represents the only step of substrate-level phosphorylation in the TCA. The beta subunit provides nucleotide specificity of the enzyme and binds the substrate succinate, while the binding sites for coenzyme A and phosphate are found in the alpha subunit. This chain is Succinate--CoA ligase [ADP-forming] subunit beta, found in Aromatoleum aromaticum (strain DSM 19018 / LMG 30748 / EbN1) (Azoarcus sp. (strain EbN1)).